The chain runs to 437 residues: Phosphoethanolamine N-methyltransferase 2 (437 aa).

N-methylethanolamine phosphate-binding positions include 186–187 (QY) and tyrosine 195. Residues 204–205 (IS), glycine 232, aspartate 254, 281–282 (DA), and arginine 298 each bind S-adenosyl-L-homocysteine. Residues tyrosine 329, tyrosine 343, 347–349 (RAY), and lysine 415 contribute to the N-methylethanolamine phosphate site.

It belongs to the class I-like SAM-binding methyltransferase superfamily.

It catalyses the reaction N-methylethanolamine phosphate + S-adenosyl-L-methionine = N,N-dimethylethanolamine phosphate + S-adenosyl-L-homocysteine + H(+). The catalysed reaction is N,N-dimethylethanolamine phosphate + S-adenosyl-L-methionine = phosphocholine + S-adenosyl-L-homocysteine + H(+). Its pathway is phospholipid metabolism; phosphatidylcholine biosynthesis; phosphocholine from phosphoethanolamine. Its activity is regulated as follows. Feedback inhibition by phosphatidylcholine and also by S-adenosylhomocysteine. Catalyzes the last two methylation reactions in the synthesis of phosphocholine, by converting phospho-monomethylethanolamine (N-methylethanolamine phosphate) into phospho-dimethylethanolamine (N,N-dimethylethanolamine phosphate) and the latter into phosphocholine. Phosphocholine is a precursor for phosphatidylcholine, a major component in membranes and a precursor itself in the production of glycoconjugates secreted by parasitic nematodes to avoid host immune responses. This is Phosphoethanolamine N-methyltransferase 2 from Caenorhabditis elegans.